The primary structure comprises 450 residues: UDP-N-acetylmuramoylalanine--D-glutamate ligase (450 aa).

Glycine 119–threonine 125 serves as a coordination point for ATP.

Belongs to the MurCDEF family.

It localises to the cytoplasm. The catalysed reaction is UDP-N-acetyl-alpha-D-muramoyl-L-alanine + D-glutamate + ATP = UDP-N-acetyl-alpha-D-muramoyl-L-alanyl-D-glutamate + ADP + phosphate + H(+). It functions in the pathway cell wall biogenesis; peptidoglycan biosynthesis. Its function is as follows. Cell wall formation. Catalyzes the addition of glutamate to the nucleotide precursor UDP-N-acetylmuramoyl-L-alanine (UMA). The protein is UDP-N-acetylmuramoylalanine--D-glutamate ligase of Streptococcus pneumoniae (strain CGSP14).